We begin with the raw amino-acid sequence, 523 residues long: Synaptotagmin-10 (523 aa).

Topologically, residues M1 to S55 are vesicular. The cysteine motif stretch occupies residues C13 to S35. The chain crosses the membrane as a helical span at residues L56 to F76. Residues W77 to P523 are Cytoplasmic-facing. Residue T136 is modified to Phosphothreonine. C2 domains lie at I231–K352 and D363–H496. Residues D262, D268, D320, F321, D322, S325, D328, D394, D400, D454, and D456 each contribute to the Ca(2+) site.

It belongs to the synaptotagmin family. Homodimer; disulfide-linked via the cysteine motif. Can also form heterodimers with SYT3, SYT6, SYT7 and SYT9. Ca(2+) serves as cofactor. As to expression, expressed only in pancreas, lung and kidney.

It localises to the cytoplasmic vesicle. The protein resides in the secretory vesicle membrane. Functionally, ca(2+) sensor specifically required for the Ca(2+)-dependent exocytosis of secretory vesicles containing IGF1 in neurons of the olfactory bulb. Exocytosis of IGF1 is required for sensory perception of smell. Not involved in Ca(2+)-dependent synaptic vesicle exocytosis. Acts through Ca(2+) and phospholipid binding to the C2 domain: Ca(2+) induces binding of the C2-domains to phospholipid membranes and to assembled SNARE-complexes; both actions contribute to triggering exocytosis. The chain is Synaptotagmin-10 (SYT10) from Homo sapiens (Human).